A 453-amino-acid chain; its full sequence is GTPase Der (453 aa).

EngA-type G domains are found at residues 4–169 and 178–353; these read PVVA…PPTD and INVA…EQHR. GTP-binding positions include 10–17, 57–61, 120–123, 184–191, 231–235, and 296–299; these read GRPNVGKS, DTGGL, NKCE, DTAGI, and NKWD. The KH-like domain maps to 354-439; the sequence is RRVSTSVINE…PIRLLWRGKK (86 aa).

It belongs to the TRAFAC class TrmE-Era-EngA-EngB-Septin-like GTPase superfamily. EngA (Der) GTPase family. In terms of assembly, associates with the 50S ribosomal subunit.

In terms of biological role, GTPase that plays an essential role in the late steps of ribosome biogenesis. This Cyanothece sp. (strain PCC 7425 / ATCC 29141) protein is GTPase Der.